The sequence spans 268 residues: GRYTVQNQWGGSSAPWNDAGLWILGSRGNQNVMAVDVNSSDGGANLNGTMTYSGEGPIGFKGARRGESNVYDVENQWGGSSAPWHAGGQFVIGSRSGQGVLAVNITSSDGGKTLTGTMTYEREGPIGFKGTQSGGDTYNVENQWGGSSAPWNKAGIWALGDRSGQAMIAMDVSSSDGGKTLEGTMQYKGEGPIGFRGKLSGANNYSVENQWGGSSAPWNAAGDWLIGDRHNQNITAVKVSSDNDGKNLDGTCTYEREGPIGFKGVATS.

A run of 4 repeats spans residues 1-67 (GRYT…RRGE), 68-135 (SNVY…QSGG), 136-202 (DTYN…LSGA), and 203-268 (NNYS…VATS). Residues 1 to 268 (GRYTVQNQWG…PIGFKGVATS (268 aa)) are 4 X approximate tandem repeats.

In terms of assembly, monomer.

Lectin specific for high mannose N-glycans, recognizes the branched moiety of these glycans. Does not recognize other types of N-glycans or monosaccharides. Agglutinates trypsin-treated sheep and rabbit erythrocytes and untreated sheep erythrocytes. Has mitogenic activity on mouse lymphocytes. Does not require metal ions for activity. The chain is Lectin ESA-2 from Eucheuma serra (Marine red alga).